A 230-amino-acid chain; its full sequence is Large ribosomal subunit protein uL1 (230 aa).

It belongs to the universal ribosomal protein uL1 family. In terms of assembly, part of the 50S ribosomal subunit.

Its function is as follows. Binds directly to 23S rRNA. The L1 stalk is quite mobile in the ribosome, and is involved in E site tRNA release. Protein L1 is also a translational repressor protein, it controls the translation of the L11 operon by binding to its mRNA. The polypeptide is Large ribosomal subunit protein uL1 (Leptospira interrogans serogroup Icterohaemorrhagiae serovar copenhageni (strain Fiocruz L1-130)).